We begin with the raw amino-acid sequence, 339 residues long: Serine/threonine-protein kinase SAPK2 (339 aa).

Residues 4 to 260 enclose the Protein kinase domain; it reads YEVIKDIGSG…IPEIKNHPWF (257 aa). ATP contacts are provided by residues 10–18 and K33; that span reads IGSGNFGVA. Catalysis depends on D123, which acts as the Proton acceptor. Residues 253 to 339 form a C-terminal region; that stretch reads EIKNHPWFLK…EDSGDFVCAL (87 aa).

The protein belongs to the protein kinase superfamily. Ser/Thr protein kinase family. Post-translationally, phosphorylated.

The enzyme catalyses L-seryl-[protein] + ATP = O-phospho-L-seryl-[protein] + ADP + H(+). The catalysed reaction is L-threonyl-[protein] + ATP = O-phospho-L-threonyl-[protein] + ADP + H(+). May play a role in signal transduction of hyperosmotic response. Can phosphorylate BZIP46 in vitro. This chain is Serine/threonine-protein kinase SAPK2 (SAPK2), found in Oryza sativa subsp. indica (Rice).